The following is a 402-amino-acid chain: MRPERGYVLCDPCLGRLFGSGNILHCEKRGRIIRGKGRDRPSECHICKGLCPSLEESCGPSLWGAAAYEFETFVVGVRLKSSMAERDDEVRSRCRLAGAAALRAYVAAMLSSYLGAMTGASVDHGAPELSITADLRDNTAEFHPRPVVLSGRYTKSVRGLSQKGAPCGGCAGEGCTSCGMLGVDTGGSVEGVISGHACGTYSARRASFTWVGGEDQESLVGGRGRPFVAQLVQPHRRGLVHPATVRLGGVVLHGLREVRSMPQLPVRFRSKVRLAVSAKGEISDDTLGRLADLGGSTLAVYEGRRRVERAIHSASHSRTGPGSFELHMEVDGGVPFKRFVSGETVFPNLSDLLGTVCSCGGFDFEEITVERGGHPGARGGTRRRPRKGPARPAGGRDRPRKT.

The active-site Nucleophile is Asp-215. The interval 370–402 (ERGGHPGARGGTRRRPRKGPARPAGGRDRPRKT) is disordered. Over residues 380-389 (GTRRRPRKGP) the composition is skewed to basic residues.

It belongs to the pseudouridine synthase Pus10 family.

The enzyme catalyses uridine(54) in tRNA = pseudouridine(54) in tRNA. It catalyses the reaction uridine(55) in tRNA = pseudouridine(55) in tRNA. In terms of biological role, responsible for synthesis of pseudouridine from uracil-54 and uracil-55 in the psi GC loop of transfer RNAs. The sequence is that of tRNA pseudouridine synthase Pus10 from Cenarchaeum symbiosum (strain A).